The primary structure comprises 264 residues: Transmembrane protein 41A (264 aa).

The first 17 residues, 1-17 (MRALLGLLLVFGGCTFA), serve as a signal peptide directing secretion. The next 5 helical transmembrane spans lie at 67–87 (AYVFLLFCSAYLYKQGFAIPG), 100–122 (GPWLGLLLCCVLTSVGATGCYLL), 153–173 (LFFFLLFLRLFPMTPNWFLNL), 175–195 (APILNIPIVQFFFSVLIGLIP), and 219–239 (WETVLKLLAIALVALVPGTLI). Positions 96–207 (GALFGPWLGL…FICVQTGSIL (112 aa)) are VTT domain.

This sequence belongs to the TMEM41 family.

It is found in the membrane. The polypeptide is Transmembrane protein 41A (Tmem41a) (Mus musculus (Mouse)).